Reading from the N-terminus, the 752-residue chain is F-box and WD repeat domain containing protein 10B (752 aa).

WD repeat units lie at residues 169–206 (GLNQ…TSLP), 451–490 (GHAG…CTRI), 493–532 (GHQG…KTFR), 534–569 (KDPI…LVKT), 572–609 (GHEG…ERCL), and 611–652 (AFKH…KVIK).

In terms of tissue distribution, expressed in pancreas, heart and skeletal muscle.

The chain is F-box and WD repeat domain containing protein 10B from Homo sapiens (Human).